The sequence spans 51 residues: Conotoxin Cal6.33 (51 aa).

The N-terminal stretch at 1–22 (MKLTCVVIIAVLILTACQFTTA) is a signal peptide. 3 disulfide bridges follow: Cys-25/Cys-39, Cys-32/Cys-43, and Cys-38/Cys-50.

Belongs to the conotoxin O1 superfamily. Expressed by the venom duct.

The protein localises to the secreted. Probable neurotoxin. The protein is Conotoxin Cal6.33 of Californiconus californicus (California cone).